Here is a 179-residue protein sequence, read N- to C-terminus: Large ribosomal subunit protein uL5 (179 aa).

The protein belongs to the universal ribosomal protein uL5 family. As to quaternary structure, part of the 50S ribosomal subunit; part of the 5S rRNA/L5/L18/L25 subcomplex. Contacts the 5S rRNA and the P site tRNA. Forms a bridge to the 30S subunit in the 70S ribosome.

This is one of the proteins that bind and probably mediate the attachment of the 5S RNA into the large ribosomal subunit, where it forms part of the central protuberance. In the 70S ribosome it contacts protein S13 of the 30S subunit (bridge B1b), connecting the 2 subunits; this bridge is implicated in subunit movement. Contacts the P site tRNA; the 5S rRNA and some of its associated proteins might help stabilize positioning of ribosome-bound tRNAs. The sequence is that of Large ribosomal subunit protein uL5 from Rickettsia bellii (strain OSU 85-389).